The following is a 70-amino-acid chain: U2-agatoxin-Ao1a (70 aa).

The signal sequence occupies residues 1–20; sequence MRAIISLFLISAMVFSMIQA. A propeptide spanning residues 21 to 34 is cleaved from the precursor; sequence VPEEEGLQLSEDER. Cystine bridges form between C37/C53, C44/C58, and C52/C68. L69 bears the Leucine amide mark.

It belongs to the neurotoxin 01 (U2-agtx) family. In terms of tissue distribution, expressed by the venom gland.

Its subcellular location is the secreted. In terms of biological role, insect active toxin causing rapid but reversible paralysis in crickets. No activity shown in mammals. Suppresses the excitatory postsynaptic potentials evoked in lobster neuromuscular synaptic preparations, possibly by blocking the presynaptic calcium channel. Induces instantaneous reversible paralysis when injected into crickets. Does not show effect on mammalian Cav2.1/CACNA1A, Cav2.2/CACNA1B and Cav2.3/CACNA1E. The protein is U2-agatoxin-Ao1a of Agelena orientalis (Funnel-web spider).